The primary structure comprises 2835 residues: Vanchrobactin synthetase VabF (2835 aa).

Residues 16-452 (EDQWPLIGTQ…IPPSEKQQIT (437 aa)) form a condensation 1 region. An adenylation 1 region spans residues 473–880 (QQTVESKPNE…GRCDHQIKIR (408 aa)). The Carrier 1 domain maps to 988-1062 (APITQPEQLL…MMAGQMVPLQ (75 aa)). Ser-1023 carries the O-(pantetheine 4'-phosphoryl)serine modification. Condensation regions lie at residues 1081–1499 (WFEE…KIQQ) and 1539–1961 (DVLP…EWDL). The adenylation 2 stretch occupies residues 1992–2394 (QQQRSPHQLA…GRSDDQIKIR (403 aa)). In terms of domain architecture, Carrier 2 spans 2503 to 2578 (NAHPGLETQL…KLASLLLDDD (76 aa)). An O-(pantetheine 4'-phosphoryl)serine modification is found at Ser-2538. A thioesterase region spans residues 2601–2821 (ALFCVNSASG…APENVRQIGE (221 aa)).

This sequence belongs to the NRP synthetase family. Requires pantetheine 4'-phosphate as cofactor.

It catalyses the reaction holo-[peptidyl-carrier protein] + L-arginine + ATP = L-arginyl-[peptidyl-carrier protein] + AMP + diphosphate. The enzyme catalyses holo-[peptidyl-carrier protein] + L-serine + ATP = L-seryl-[peptidyl-carrier protein] + AMP + diphosphate. It functions in the pathway siderophore biosynthesis. Involved in the synthesis of the siderophore vanchrobactin. Probably adenylates L-arginine via its first adenylation domain and loads it onto its first peptidyl carrier domain via a thioester linkage to the phosphopanthetheine moiety. In addition, may adenylate L-serine via its second adenylation domain and loads it onto its second peptidyl carrier domain via a thioester linkage to the phosphopanthetheine moiety. The thioesterase domain may release vanchrobactin after condensation of the siderophore components. This Vibrio anguillarum (Listonella anguillarum) protein is Vanchrobactin synthetase VabF.